The primary structure comprises 202 residues: Guanylate kinase (202 aa).

The Guanylate kinase-like domain maps to 18-200; sequence LKPVVVFGPS…AYKQLEAICL (183 aa). Residue 25-32 participates in ATP binding; sequence GPSGVGKS.

This sequence belongs to the guanylate kinase family.

It catalyses the reaction GMP + ATP = GDP + ADP. Essential for recycling GMP and indirectly, cGMP. The sequence is that of Guanylate kinase from Schizosaccharomyces pombe (strain 972 / ATCC 24843) (Fission yeast).